The following is a 167-amino-acid chain: Dual specificity protein phosphatase 1B (167 aa).

Residues 24–165 (DLSEIQQGLF…LQQFEKSIQG (142 aa)) enclose the Tyrosine-protein phosphatase domain. C109 serves as the catalytic Phosphocysteine intermediate.

It belongs to the protein-tyrosine phosphatase family. Non-receptor class dual specificity subfamily. As to quaternary structure, associates with MPK3 and MPK6. Interacts with MPK6 is promoted during HR-like responses triggered by fungal elicitors, whereas interaction with MPK3 in repressed. As to expression, expressed in flowers, seedlings, roots, leaves, and seeds. Present in stomata and meristematic cells.

It is found in the nucleus. It localises to the cytoplasm. It carries out the reaction O-phospho-L-tyrosyl-[protein] + H2O = L-tyrosyl-[protein] + phosphate. It catalyses the reaction O-phospho-L-seryl-[protein] + H2O = L-seryl-[protein] + phosphate. The catalysed reaction is O-phospho-L-threonyl-[protein] + H2O = L-threonyl-[protein] + phosphate. In terms of biological role, has a dual specificity toward Ser/Thr and Tyr-containing proteins. Prevents biotic and abiotic stress responses, including ozone, oxidative stress and pathogen attacks; represses MAPK activities during hypersensitive response to limit the spread of the HR response after infection by necrotrophic pathogen such as Botrytis cinerea. May be also involved in ABA and salt responses. Dephosphorylates MPK3 and MPK6. The chain is Dual specificity protein phosphatase 1B (DSPTP1B) from Arabidopsis thaliana (Mouse-ear cress).